The sequence spans 353 residues: Photosystem II protein D1 (353 aa).

Threonine 2 bears the N-acetylthreonine mark. At threonine 2 the chain carries Phosphothreonine. 3 helical membrane passes run 29–46 (YIGWFGVLMIPTLLTATS), 118–133 (HFLLGVACYMGREWEL), and 142–156 (WIAVAYSAPVAAATA). Residue histidine 118 participates in chlorophyll a binding. Tyrosine 126 is a pheophytin a binding site. [CaMn4O5] cluster contacts are provided by aspartate 170 and glutamate 189. A helical membrane pass occupies residues 197 to 218 (FHMLGVAGVFGGSLFSAMHGSL). Histidine 198 serves as a coordination point for chlorophyll a. A quinone contacts are provided by residues histidine 215 and 264–265 (SF). Histidine 215 contacts Fe cation. Histidine 272 is a Fe cation binding site. Residues 274–288 (FLAAWPVVGIWFTAL) traverse the membrane as a helical segment. [CaMn4O5] cluster contacts are provided by histidine 332, glutamate 333, aspartate 342, and alanine 344. Positions 345 to 353 (AVEAPSING) are excised as a propeptide.

The protein belongs to the reaction center PufL/M/PsbA/D family. PSII is composed of 1 copy each of membrane proteins PsbA, PsbB, PsbC, PsbD, PsbE, PsbF, PsbH, PsbI, PsbJ, PsbK, PsbL, PsbM, PsbT, PsbX, PsbY, PsbZ, Psb30/Ycf12, at least 3 peripheral proteins of the oxygen-evolving complex and a large number of cofactors. It forms dimeric complexes. The D1/D2 heterodimer binds P680, chlorophylls that are the primary electron donor of PSII, and subsequent electron acceptors. It shares a non-heme iron and each subunit binds pheophytin, quinone, additional chlorophylls, carotenoids and lipids. D1 provides most of the ligands for the Mn4-Ca-O5 cluster of the oxygen-evolving complex (OEC). There is also a Cl(-1) ion associated with D1 and D2, which is required for oxygen evolution. The PSII complex binds additional chlorophylls, carotenoids and specific lipids. is required as a cofactor. Tyr-161 forms a radical intermediate that is referred to as redox-active TyrZ, YZ or Y-Z. In terms of processing, C-terminally processed by CTPA; processing is essential to allow assembly of the oxygen-evolving complex and thus photosynthetic growth.

It is found in the plastid. It localises to the chloroplast thylakoid membrane. The catalysed reaction is 2 a plastoquinone + 4 hnu + 2 H2O = 2 a plastoquinol + O2. Functionally, photosystem II (PSII) is a light-driven water:plastoquinone oxidoreductase that uses light energy to abstract electrons from H(2)O, generating O(2) and a proton gradient subsequently used for ATP formation. It consists of a core antenna complex that captures photons, and an electron transfer chain that converts photonic excitation into a charge separation. The D1/D2 (PsbA/PsbD) reaction center heterodimer binds P680, the primary electron donor of PSII as well as several subsequent electron acceptors. The polypeptide is Photosystem II protein D1 (Medicago sativa (Alfalfa)).